A 26-amino-acid polypeptide reads, in one-letter code: Conotoxin Eb6.18 (26 aa).

2 cysteine pairs are disulfide-bonded: cysteine 7/cysteine 18 and cysteine 13/cysteine 25.

This sequence belongs to the conotoxin O1 superfamily. In terms of tissue distribution, expressed by the venom duct.

The protein localises to the secreted. The polypeptide is Conotoxin Eb6.18 (E1) (Conus ebraeus (Hebrew cone)).